Here is a 234-residue protein sequence, read N- to C-terminus: uncharacterized protein (234 aa).

LRR repeat units lie at residues 44 to 63 (LEFL…LPKL), 64 to 84 (KLRK…EKCP), 85 to 107 (NLTH…PLKQ), and 111 to 134 (LKSL…VFKL). The interval 161–234 (EGLDDEEEGE…GEEERGQKRK (74 aa)) is disordered. Residues 163 to 226 (LDDEEEGEHE…GEEDEEELGE (64 aa)) show a composition bias toward acidic residues.

This sequence belongs to the ANP32 family. As to expression, expressed in activated stem cells, such as mobilized CD34+ cells and cord blood CD34+ cells, but not in resting bone marrow CD34+ cells. Expressed in a variety of neoplastic cell lines, mainly in prostatic adenocarcinoma cell lines. Not expressed in normal prostatic tissue.

This is an uncharacterized protein from Homo sapiens (Human).